Consider the following 412-residue polypeptide: Light-independent protochlorophyllide reductase subunit N (412 aa).

Residues Cys-17, Cys-42, and Cys-103 each coordinate [4Fe-4S] cluster.

This sequence belongs to the BchN/ChlN family. As to quaternary structure, protochlorophyllide reductase is composed of three subunits; ChlL, ChlN and ChlB. Forms a heterotetramer of two ChlB and two ChlN subunits. [4Fe-4S] cluster serves as cofactor.

The enzyme catalyses chlorophyllide a + oxidized 2[4Fe-4S]-[ferredoxin] + 2 ADP + 2 phosphate = protochlorophyllide a + reduced 2[4Fe-4S]-[ferredoxin] + 2 ATP + 2 H2O. It participates in porphyrin-containing compound metabolism; chlorophyll biosynthesis (light-independent). Its function is as follows. Component of the dark-operative protochlorophyllide reductase (DPOR) that uses Mg-ATP and reduced ferredoxin to reduce ring D of protochlorophyllide (Pchlide) to form chlorophyllide a (Chlide). This reaction is light-independent. The NB-protein (ChlN-ChlB) is the catalytic component of the complex. This is Light-independent protochlorophyllide reductase subunit N from Synechococcus sp. (strain CC9902).